We begin with the raw amino-acid sequence, 377 residues long: 4-hydroxy-3-methylbut-2-en-1-yl diphosphate synthase (flavodoxin) (377 aa).

Positions 275, 278, 310, and 317 each coordinate [4Fe-4S] cluster.

The protein belongs to the IspG family. Requires [4Fe-4S] cluster as cofactor.

It catalyses the reaction (2E)-4-hydroxy-3-methylbut-2-enyl diphosphate + oxidized [flavodoxin] + H2O + 2 H(+) = 2-C-methyl-D-erythritol 2,4-cyclic diphosphate + reduced [flavodoxin]. The protein operates within isoprenoid biosynthesis; isopentenyl diphosphate biosynthesis via DXP pathway; isopentenyl diphosphate from 1-deoxy-D-xylulose 5-phosphate: step 5/6. Its function is as follows. Converts 2C-methyl-D-erythritol 2,4-cyclodiphosphate (ME-2,4cPP) into 1-hydroxy-2-methyl-2-(E)-butenyl 4-diphosphate. The polypeptide is 4-hydroxy-3-methylbut-2-en-1-yl diphosphate synthase (flavodoxin) (Ruegeria sp. (strain TM1040) (Silicibacter sp.)).